The primary structure comprises 264 residues: Phycocyanobilin:ferredoxin oxidoreductase (264 aa).

Belongs to the HY2 family.

The enzyme catalyses (2R,3Z)-phycocyanobilin + 4 oxidized [2Fe-2S]-[ferredoxin] = biliverdin IXalpha + 4 reduced [2Fe-2S]-[ferredoxin] + 4 H(+). Functionally, catalyzes the four-electron reduction of biliverdin IX-alpha (2-electron reduction at both the A and D rings); the reaction proceeds via an isolatable 2-electron intermediate, 181,182-dihydrobiliverdin. This chain is Phycocyanobilin:ferredoxin oxidoreductase, found in Prochlorococcus marinus (strain MIT 9303).